The sequence spans 348 residues: MKKWSRHLLAAGALALGMSAAHADDNNTLYFYNWTEYVPPGLLEQFTKETGIKVIYSTYESNETMYAKLKTYKDGAYDLVVPSTYYVDKMRKEGMIQKIDKSKLTNFSNLDPDMLNKPFDPNNDYSIPYIWGATAIGVNGDAVDPKSVTSWADLWKPEYKGSLLLTDDAREVFQMALRKLGYSGNTTDPKEIEAAYNELKKLMPNVAAFNSDNPANPYMEGEVNLGMIWNGSAFVARQAGTPIDVVWPKEGGIFWMDSLAIPANAKNKEGALKLINFLLRPDVAKQVAETIGYPTPNLAARKLLSPEVANDKTLYPDAETIKNGEWQNDVGAASSIYEEYYQKLKAGR.

The signal sequence occupies residues 1–23 (MKKWSRHLLAAGALALGMSAAHA). Spermidine-binding positions include E36, Y85, 168-171 (DARE), and Q327.

The protein belongs to the bacterial solute-binding protein PotD/PotF family.

It localises to the periplasm. Its function is as follows. Required for the activity of the bacterial periplasmic transport system of putrescine and spermidine. Polyamine binding protein. The chain is Spermidine/putrescine-binding periplasmic protein (potD) from Escherichia coli (strain K12).